The chain runs to 121 residues: Small ribosomal subunit protein uS13 (121 aa).

A disordered region spans residues 93-121; it reads RGLPVRGQNTKNNARTRKGPRRTVANKKK. Over residues 106–121 the composition is skewed to basic residues; the sequence is ARTRKGPRRTVANKKK.

Belongs to the universal ribosomal protein uS13 family. As to quaternary structure, part of the 30S ribosomal subunit. Forms a loose heterodimer with protein S19. Forms two bridges to the 50S subunit in the 70S ribosome.

Functionally, located at the top of the head of the 30S subunit, it contacts several helices of the 16S rRNA. In the 70S ribosome it contacts the 23S rRNA (bridge B1a) and protein L5 of the 50S subunit (bridge B1b), connecting the 2 subunits; these bridges are implicated in subunit movement. Contacts the tRNAs in the A and P-sites. The sequence is that of Small ribosomal subunit protein uS13 from Bacillus pumilus (strain SAFR-032).